Here is a 23-residue protein sequence, read N- to C-terminus: Septenin 2c (23 aa).

Expressed in skin granular glands.

It localises to the secreted. May act as an antimicrobial peptide. The chain is Septenin 2c from Osteopilus septentrionalis (Cuban treefrog).